We begin with the raw amino-acid sequence, 300 residues long: Lipoyl synthase 2 (300 aa).

Residues cysteine 46, cysteine 51, cysteine 57, cysteine 72, cysteine 76, cysteine 79, and serine 294 each contribute to the [4Fe-4S] cluster site. The region spanning 58–283 (YAQKTATFLL…GKLAREMGFS (226 aa)) is the Radical SAM core domain.

This sequence belongs to the radical SAM superfamily. Lipoyl synthase family. [4Fe-4S] cluster serves as cofactor.

The protein localises to the cytoplasm. The enzyme catalyses [[Fe-S] cluster scaffold protein carrying a second [4Fe-4S](2+) cluster] + N(6)-octanoyl-L-lysyl-[protein] + 2 oxidized [2Fe-2S]-[ferredoxin] + 2 S-adenosyl-L-methionine + 4 H(+) = [[Fe-S] cluster scaffold protein] + N(6)-[(R)-dihydrolipoyl]-L-lysyl-[protein] + 4 Fe(3+) + 2 hydrogen sulfide + 2 5'-deoxyadenosine + 2 L-methionine + 2 reduced [2Fe-2S]-[ferredoxin]. The protein operates within protein modification; protein lipoylation via endogenous pathway; protein N(6)-(lipoyl)lysine from octanoyl-[acyl-carrier-protein]: step 2/2. Its function is as follows. Catalyzes the radical-mediated insertion of two sulfur atoms into the C-6 and C-8 positions of the octanoyl moiety bound to the lipoyl domains of lipoate-dependent enzymes, thereby converting the octanoylated domains into lipoylated derivatives. This chain is Lipoyl synthase 2, found in Nostoc sp. (strain PCC 7120 / SAG 25.82 / UTEX 2576).